We begin with the raw amino-acid sequence, 207 residues long: MPMLSPHSLKPDTLHLPPGTSEFLGCQRRHTLPASEFRCLTPQDAISVFEIEREAFISVSGTCPLYLDEIRHFLTLCPELSLGWFEEGRLVAFIIGSLWDKERLTQESLTLHRPGGRTAHLHVLAVHRTFRQQGKGSVLLWRYLHHLGSQPAVRRAVLMCEDALVPFYEKFGFQAVGPCAVTVGSLTFMELQCSLRCHAFLRRNSGC.

Thr31 is modified (phosphothreonine; by PKA). Positions 35–194 (SEFRCLTPQD…SLTFMELQCS (160 aa)) constitute an N-acetyltransferase domain. Leu124 contributes to the substrate binding site. Acetyl-CoA contacts are provided by residues 124–126 (LAV) and 132–137 (QQGKGS). Substrate is bound at residue Met159. 168–170 (YEK) is an acetyl-CoA binding site. The residue at position 205 (Ser205) is a Phosphoserine.

The protein belongs to the acetyltransferase family. AANAT subfamily. Monomer. Interacts with several 14-3-3 proteins, including YWHAB, YWHAE, YWHAG and YWHAZ, preferentially when phosphorylated at Thr-31. Phosphorylation on Ser-205 also allows binding to YWHAZ, but with lower affinity. The interaction with YWHAZ considerably increases affinity for arylalkylamines and acetyl-CoA and protects the enzyme from dephosphorylation and proteasomal degradation. It may also prevent thiol-dependent inactivation. Post-translationally, cAMP-dependent phosphorylation on both N-terminal Thr-31 and C-terminal Ser-205 regulates AANAT activity by promoting interaction with 14-3-3 proteins. Highly expressed in pineal gland and retina. Also detected in heart and intestine.

The protein localises to the cytoplasm. The catalysed reaction is a 2-arylethylamine + acetyl-CoA = an N-acetyl-2-arylethylamine + CoA + H(+). The protein operates within aromatic compound metabolism; melatonin biosynthesis; melatonin from serotonin: step 1/2. Functionally, controls the night/day rhythm of melatonin production in the pineal gland. Catalyzes the N-acetylation of serotonin into N-acetylserotonin, the penultimate step in the synthesis of melatonin. The chain is Serotonin N-acetyltransferase (AANAT) from Mesocricetus auratus (Golden hamster).